The following is a 437-amino-acid chain: Probable N-acetylmuramidase (437 aa).

An N-terminal signal peptide occupies residues 1–57 (MPVSRVKVKNRHLKKKTKKPLAFYKPATKFAGAVLIAGTLTTTHELLLQQTSPMVQA). Disordered stretches follow at residues 217 to 244 (SSAG…SSTT), 290 to 320 (ASST…SQTT), and 367 to 392 (AASN…NSNA). Positions 243 to 286 (TTYTVKSGDTLWGISQRYGISVAQIQSANNLKSTIIYIGQKLVL) constitute a LysM 1 domain. Positions 290–317 (ASSTNSGGSNNSASTTPTTSVTPAKPTS) are enriched in low complexity. The 44-residue stretch at 319–362 (TTVKVKSGDTLWALSVKYKTSIAQLKSWNHLSSDTIYIGQNLIV) folds into the LysM 2 domain. The LysM 3 domain occupies 393-436 (SIHKVVKGDTLWGLSQKSGSPIASIKAWNHLSSDTILIGQYLRI).

This sequence belongs to the glycosyl hydrolase 73 family.

The protein resides in the secreted. It carries out the reaction Hydrolysis of (1-&gt;4)-beta-linkages between N-acetylmuramic acid and N-acetyl-D-glucosamine residues in a peptidoglycan and between N-acetyl-D-glucosamine residues in chitodextrins.. In terms of biological role, hydrolyzes the cell wall of L.lactis and M.lysodeikticus. Required for cell separation during growth. This chain is Probable N-acetylmuramidase (acmA), found in Lactococcus lactis subsp. cremoris (strain MG1363).